Here is a 227-residue protein sequence, read N- to C-terminus: Uridylate kinase (227 aa).

7-11 is a binding site for ATP; it reads KISGK. UMP is bound at residue Gly44. Positions 45 and 49 each coordinate ATP. UMP is bound by residues Asp66 and 114–120; that span reads FQPGQST. The ATP site is built by Thr140, Asn141, Tyr146, and Asp149.

This sequence belongs to the UMP kinase family. In terms of assembly, homohexamer.

The protein localises to the cytoplasm. The catalysed reaction is UMP + ATP = UDP + ADP. The protein operates within pyrimidine metabolism; CTP biosynthesis via de novo pathway; UDP from UMP (UMPK route): step 1/1. With respect to regulation, unlike most bacteria, is not activated by GTP. UTP acts as a competitive inhibitor against both substrates. High concentration of UMP abolishes the inhibition of UTP at low ATP concentrations, indicating that UTP binds to the acceptor site (UMP site). In terms of biological role, catalyzes the reversible phosphorylation of UMP to UDP, with ATP as the most efficient phosphate donor. Is also able to phosphorylate dUMP, although much less efficiently. In Saccharolobus solfataricus (strain ATCC 35092 / DSM 1617 / JCM 11322 / P2) (Sulfolobus solfataricus), this protein is Uridylate kinase (pyrH).